Reading from the N-terminus, the 82-residue chain is MRQGIHPEYQQVLFHDTNADAYFIIGSTIQTKQTREYEGKVYPYVTLDISSASHPFYTGEVRQASNEGRVATFNKRFSRFKR.

This sequence belongs to the bacterial ribosomal protein bL31 family. Type B subfamily. As to quaternary structure, part of the 50S ribosomal subunit.

The polypeptide is Large ribosomal subunit protein bL31B (Acinetobacter baylyi (strain ATCC 33305 / BD413 / ADP1)).